An 813-amino-acid polypeptide reads, in one-letter code: Ribonuclease R (813 aa).

The RNB domain occupies 260 to 587; it reads RVDLRDLPLV…LHRAIKYLLA (328 aa). N6-acetyllysine is present on K544. One can recognise an S1 motif domain in the interval 644 to 725; it reads GNVFKGVISS…DERKIDFSLI (82 aa). Positions 733–813 are disordered; it reads NVGKTAREKA…KRAAKKKVAE (81 aa). 2 stretches are compositionally biased toward basic and acidic residues: residues 737–749 and 761–774; these read TARE…DAGK and VNFE…GEKK. The span at 775 to 791 shows a compositional bias: basic residues; the sequence is TKPKAAKKDARKAKKPS. Over residues 792 to 801 the composition is skewed to low complexity; the sequence is AKTQKIAAAT. Residues 802-813 are compositionally biased toward basic residues; sequence KAKRAAKKKVAE.

The protein belongs to the RNR ribonuclease family. RNase R subfamily. In terms of assembly, monomer.

The protein localises to the cytoplasm. It carries out the reaction Exonucleolytic cleavage in the 3'- to 5'-direction to yield nucleoside 5'-phosphates.. Functionally, 3'-5' exoribonuclease that releases 5'-nucleoside monophosphates and is involved in maturation of structured RNAs. Required for the expression of virulence genes on the large plasmid of S.flexneri at the post-transcriptional level. This Shigella flexneri protein is Ribonuclease R.